A 221-amino-acid polypeptide reads, in one-letter code: ATP phosphoribosyltransferase (221 aa).

Belongs to the ATP phosphoribosyltransferase family. Short subfamily. In terms of assembly, heteromultimer composed of HisG and HisZ subunits.

Its subcellular location is the cytoplasm. The enzyme catalyses 1-(5-phospho-beta-D-ribosyl)-ATP + diphosphate = 5-phospho-alpha-D-ribose 1-diphosphate + ATP. It participates in amino-acid biosynthesis; L-histidine biosynthesis; L-histidine from 5-phospho-alpha-D-ribose 1-diphosphate: step 1/9. Its function is as follows. Catalyzes the condensation of ATP and 5-phosphoribose 1-diphosphate to form N'-(5'-phosphoribosyl)-ATP (PR-ATP). Has a crucial role in the pathway because the rate of histidine biosynthesis seems to be controlled primarily by regulation of HisG enzymatic activity. The chain is ATP phosphoribosyltransferase from Anaeromyxobacter sp. (strain K).